Reading from the N-terminus, the 765-residue chain is Dipeptidyl peptidase 4 (765 aa).

At 1–6 (MKTPWK) the chain is on the cytoplasmic side. A helical; Signal-anchor for type II membrane protein transmembrane segment spans residues 7–29 (VLLGLLGLAALITIITVPVVLLN). At 30 to 765 (KGNDAAADSR…HFIKQCFSLP (736 aa)) the chain is on the extracellular side. N-linked (GlcNAc...) asparagine glycosylation is found at Asn84, Asn91, Asn149, Asn178, Asn228, Asn280, Asn320, Asn330, and Asn331. Intrachain disulfides connect Cys384-Cys393, Cys443-Cys446, and Cys453-Cys471. Residue Asn519 is glycosylated (N-linked (GlcNAc...) asparagine). Ser629 (charge relay system) is an active-site residue. A disulfide bond links Cys648 and Cys761. N-linked (GlcNAc...) asparagine glycosylation occurs at Asn684. Active-site charge relay system residues include Asp707 and His739.

Belongs to the peptidase S9B family. DPPIV subfamily. As to quaternary structure, monomer. Homodimer. Heterodimer with Seprase (FAP). Requires homodimerization for optimal dipeptidyl peptidase activity and T-cell costimulation. Found in a membrane raft complex, at least composed of BCL10, CARD11, DPP4 and IKBKB. Associates with collagen. Interacts with PTPRC; the interaction is enhanced in an interleukin-12-dependent manner in activated lymphocytes. Interacts (extracellular domain) with ADA; does not inhibit its dipeptidyl peptidase activity. Interacts with CAV1 (via the N-terminus); the interaction is direct. Interacts (via cytoplasmic tail) with CARD11 (via PDZ domain); its homodimerization is necessary for interaction with CARD11. Interacts with IGF2R; the interaction is direct. Interacts with GPC3. Post-translationally, the soluble form (Dipeptidyl peptidase 4 soluble form also named SDPP) derives from the membrane form (Dipeptidyl peptidase 4 membrane form also named MDPP) by proteolytic processing. N- and O-Glycosylated. In terms of processing, phosphorylated. Mannose 6-phosphate residues in the carbohydrate moiety are necessary for interaction with IGF2R in activated T-cells. Mannose 6-phosphorylation is induced during T-cell activation.

The protein localises to the secreted. It localises to the cell membrane. The protein resides in the apical cell membrane. Its subcellular location is the cell projection. It is found in the invadopodium membrane. The protein localises to the lamellipodium membrane. It localises to the cell junction. The protein resides in the membrane raft. The catalysed reaction is Release of an N-terminal dipeptide, Xaa-Yaa-|-Zaa-, from a polypeptide, preferentially when Yaa is Pro, provided Zaa is neither Pro nor hydroxyproline.. Inhibited by GPC3 and diprotin A. Functionally, cell surface glycoprotein receptor involved in the costimulatory signal essential for T-cell receptor (TCR)-mediated T-cell activation. Acts as a positive regulator of T-cell coactivation, by binding at least ADA, CAV1, IGF2R, and PTPRC. Its binding to CAV1 and CARD11 induces T-cell proliferation and NF-kappa-B activation in a T-cell receptor/CD3-dependent manner. Its interaction with ADA also regulates lymphocyte-epithelial cell adhesion. In association with FAP is involved in the pericellular proteolysis of the extracellular matrix (ECM), the migration and invasion of endothelial cells into the ECM. May be involved in the promotion of lymphatic endothelial cells adhesion, migration and tube formation. When overexpressed, enhanced cell proliferation, a process inhibited by GPC3. Also acts as a serine exopeptidase with a dipeptidyl peptidase activity that regulates various physiological processes by cleaving peptides in the circulation, including many chemokines, mitogenic growth factors, neuropeptides and peptide hormones. Removes N-terminal dipeptides sequentially from polypeptides having unsubstituted N-termini provided that the penultimate residue is proline. The sequence is that of Dipeptidyl peptidase 4 (DPP4) from Felis catus (Cat).